Reading from the N-terminus, the 162-residue chain is Allophycocyanin subunit beta (162 aa).

Position 72 is an N4-methylasparagine (Asn72). Cys82 is a (2R,3E)-phycocyanobilin binding site.

Belongs to the phycobiliprotein family. As to quaternary structure, heterohexamer of two alpha chains, one alpha-B chain and three beta chains. In terms of processing, contains one covalently linked phycocyanobilin chromophore. The chromophore is added by phycocyanobilin lyase CpcS 1.

It is found in the cellular thylakoid membrane. Its function is as follows. Light-harvesting photosynthetic bile pigment-protein from the phycobiliprotein complex. Allophycocyanin has a maximum absorption at approximately 650 to 653 nanometers. The polypeptide is Allophycocyanin subunit beta (apcB) (Nostoc sp. (strain PCC 7120 / SAG 25.82 / UTEX 2576)).